The following is a 367-amino-acid chain: Probable protein phosphatase 2C 57 (367 aa).

Residues 1–29 (MEEHRLGGGGGGGGGGGRPPIPGAAGRKL) form a disordered region. Positions 7–18 (GGGGGGGGGGGR) are enriched in gly residues. A PPM-type phosphatase domain is found at 67 to 331 (RSGGWADIGS…DNLSVVVICF (265 aa)). Mn(2+)-binding residues include Asp111, Gly112, Asp279, and Asp322.

This sequence belongs to the PP2C family. Mg(2+) is required as a cofactor. The cofactor is Mn(2+).

It carries out the reaction O-phospho-L-seryl-[protein] + H2O = L-seryl-[protein] + phosphate. The catalysed reaction is O-phospho-L-threonyl-[protein] + H2O = L-threonyl-[protein] + phosphate. This chain is Probable protein phosphatase 2C 57, found in Oryza sativa subsp. japonica (Rice).